We begin with the raw amino-acid sequence, 134 residues long: Small ribosomal subunit protein uS8c (134 aa).

As to quaternary structure, component of the chloroplast small ribosomal subunit (SSU). Mature 70S chloroplast ribosomes of higher plants consist of a small (30S) and a large (50S) subunit. The 30S small subunit contains 1 molecule of ribosomal RNA (16S rRNA) and 24 different proteins. The 50S large subunit contains 3 rRNA molecules (23S, 5S and 4.5S rRNA) and 33 different proteins.

It is found in the plastid. The protein localises to the chloroplast. Functionally, component of the chloroplast ribosome (chloro-ribosome), a dedicated translation machinery responsible for the synthesis of chloroplast genome-encoded proteins, including proteins of the transcription and translation machinery and components of the photosynthetic apparatus. The sequence is that of Small ribosomal subunit protein uS8c (rps8) from Spinacia oleracea (Spinach).